A 206-amino-acid chain; its full sequence is Imidazoleglycerol-phosphate dehydratase (206 aa).

Belongs to the imidazoleglycerol-phosphate dehydratase family.

It localises to the cytoplasm. It catalyses the reaction D-erythro-1-(imidazol-4-yl)glycerol 3-phosphate = 3-(imidazol-4-yl)-2-oxopropyl phosphate + H2O. Its pathway is amino-acid biosynthesis; L-histidine biosynthesis; L-histidine from 5-phospho-alpha-D-ribose 1-diphosphate: step 6/9. The sequence is that of Imidazoleglycerol-phosphate dehydratase from Cutibacterium acnes (strain DSM 16379 / KPA171202) (Propionibacterium acnes).